The chain runs to 289 residues: Elongation factor Ts (289 aa).

Residues 80 to 83 are involved in Mg(2+) ion dislocation from EF-Tu; it reads TDFV.

The protein belongs to the EF-Ts family.

It localises to the cytoplasm. In terms of biological role, associates with the EF-Tu.GDP complex and induces the exchange of GDP to GTP. It remains bound to the aminoacyl-tRNA.EF-Tu.GTP complex up to the GTP hydrolysis stage on the ribosome. In Francisella tularensis subsp. holarctica (strain LVS), this protein is Elongation factor Ts.